The following is a 158-amino-acid chain: NAD(P)H-quinone oxidoreductase subunit J, chloroplastic (158 aa).

The protein belongs to the complex I 30 kDa subunit family. As to quaternary structure, NDH is composed of at least 16 different subunits, 5 of which are encoded in the nucleus.

The protein localises to the plastid. The protein resides in the chloroplast thylakoid membrane. The enzyme catalyses a plastoquinone + NADH + (n+1) H(+)(in) = a plastoquinol + NAD(+) + n H(+)(out). The catalysed reaction is a plastoquinone + NADPH + (n+1) H(+)(in) = a plastoquinol + NADP(+) + n H(+)(out). NDH shuttles electrons from NAD(P)H:plastoquinone, via FMN and iron-sulfur (Fe-S) centers, to quinones in the photosynthetic chain and possibly in a chloroplast respiratory chain. The immediate electron acceptor for the enzyme in this species is believed to be plastoquinone. Couples the redox reaction to proton translocation, and thus conserves the redox energy in a proton gradient. This chain is NAD(P)H-quinone oxidoreductase subunit J, chloroplastic, found in Oenothera argillicola (Appalachian evening primrose).